We begin with the raw amino-acid sequence, 174 residues long: Co-chaperone protein HscB homolog (174 aa).

Residues 2 to 74 (NYFELFKFPP…IRRAEHMLSL (73 aa)) form the J domain.

It belongs to the HscB family. As to quaternary structure, interacts with HscA and stimulates its ATPase activity.

Functionally, co-chaperone involved in the maturation of iron-sulfur cluster-containing proteins. Seems to help targeting proteins to be folded toward HscA. The protein is Co-chaperone protein HscB homolog of Shewanella baltica (strain OS195).